The sequence spans 598 residues: Elongation factor 4 2 (598 aa).

In terms of domain architecture, tr-type G spans K2–K184. GTP is bound by residues D14 to T19 and N131 to D134.

Belongs to the TRAFAC class translation factor GTPase superfamily. Classic translation factor GTPase family. LepA subfamily.

It is found in the cell inner membrane. It carries out the reaction GTP + H2O = GDP + phosphate + H(+). Functionally, required for accurate and efficient protein synthesis under certain stress conditions. May act as a fidelity factor of the translation reaction, by catalyzing a one-codon backward translocation of tRNAs on improperly translocated ribosomes. Back-translocation proceeds from a post-translocation (POST) complex to a pre-translocation (PRE) complex, thus giving elongation factor G a second chance to translocate the tRNAs correctly. Binds to ribosomes in a GTP-dependent manner. This is Elongation factor 4 2 from Rhodopirellula baltica (strain DSM 10527 / NCIMB 13988 / SH1).